The chain runs to 207 residues: Large ribosomal subunit protein uL4 (207 aa).

Residues 56–76 form a disordered region; it reads EVRGGGRKPWRQKGTGRARAG. The span at 60-71 shows a compositional bias: basic residues; the sequence is GGRKPWRQKGTG.

Belongs to the universal ribosomal protein uL4 family. Part of the 50S ribosomal subunit.

Its function is as follows. One of the primary rRNA binding proteins, this protein initially binds near the 5'-end of the 23S rRNA. It is important during the early stages of 50S assembly. It makes multiple contacts with different domains of the 23S rRNA in the assembled 50S subunit and ribosome. Functionally, forms part of the polypeptide exit tunnel. This is Large ribosomal subunit protein uL4 from Desulfitobacterium hafniense (strain Y51).